A 142-amino-acid polypeptide reads, in one-letter code: Transcriptional regulator MraZ (142 aa).

2 consecutive SpoVT-AbrB domains span residues 5 to 47 (EYPY…PLAS) and 76 to 119 (ANKA…NPGR).

The protein belongs to the MraZ family. In terms of assembly, forms oligomers.

Its subcellular location is the cytoplasm. The protein resides in the nucleoid. In Deinococcus deserti (strain DSM 17065 / CIP 109153 / LMG 22923 / VCD115), this protein is Transcriptional regulator MraZ.